The chain runs to 78 residues: Large ribosomal subunit protein bL28 (78 aa).

It belongs to the bacterial ribosomal protein bL28 family.

The polypeptide is Large ribosomal subunit protein bL28 (Hydrogenovibrio crunogenus (strain DSM 25203 / XCL-2) (Thiomicrospira crunogena)).